The following is a 401-amino-acid chain: Multidrug resistance protein MdtA (401 aa).

The N-terminal stretch at 1-20 is a signal peptide; that stretch reads MNQNNKHRTLLFRAALAAIA.

The protein belongs to the membrane fusion protein (MFP) (TC 8.A.1) family. In terms of assembly, part of a tripartite efflux system composed of MdtA, MdtB and MdtC.

The protein resides in the cell inner membrane. In Photorhabdus laumondii subsp. laumondii (strain DSM 15139 / CIP 105565 / TT01) (Photorhabdus luminescens subsp. laumondii), this protein is Multidrug resistance protein MdtA.